A 1456-amino-acid polypeptide reads, in one-letter code: ABC transporter G family member 44 (1456 aa).

An ABC transporter 1 domain is found at 169-442 (ANLLHVVPNK…FESMGFKCPD (274 aa)). Position 202–209 (202–209 (GPPGSGKT)) interacts with ATP. The region spanning 520–733 (ELLRTCIARE…AMNAIAVNEF (214 aa)) is the ABC transmembrane type-2 1 domain. Transmembrane regions (helical) follow at residues 538-558 (FVYRFRAFQLLVITIIVMTLF), 571-591 (GIVYLGALFFAMVAHMFNGFS), 626-646 (IPISCFEVAITVFLSYYVIGF), 658-678 (LLLLLVNQMAAALFRFIAALG), 682-702 (VVANTLASFALLVLLVLSGFI), and 768-788 (IGVGALFGYVIVFNILFTIAL). A disordered region spans residues 812-844 (NITGETINDPRNSASSGQTTNTRRNAAPGEASE). A compositionally biased stretch (polar residues) spans 814 to 835 (TGETINDPRNSASSGQTTNTRR). Residues 858-1110 (VAFNNIRYSV…DLIEYFEGVE (253 aa)) form the ABC transporter 2 domain. 903-910 (GVSGAGKT) contributes to the ATP binding site. Positions 1183 to 1397 (TQCMACLWKQ…TLYGLVASQF (215 aa)) constitute an ABC transmembrane type-2 2 domain. 7 helical membrane passes run 1202 to 1222 (YTVVRFFFSLIVALMFGTIFW), 1242 to 1262 (YAAVLFMGISYSSSVQPVVAV), 1290 to 1310 (LPYVLVQSAVYGVIVYAMIGF), 1317 to 1337 (FFWYLYFMYFTLLYFTFYGML), 1347 to 1367 (IASIVSSFFYGIWNLFSGFVI), 1378 to 1398 (WYSWACPVSWTLYGLVASQFG), and 1425 to 1445 (FLGVVAVAVAGFATLFAVSFS).

It belongs to the ABC transporter superfamily. ABCG family. PDR (TC 3.A.1.205) subfamily.

It localises to the membrane. In terms of biological role, may be a general defense protein. This chain is ABC transporter G family member 44, found in Oryza sativa subsp. japonica (Rice).